A 248-amino-acid polypeptide reads, in one-letter code: MAGHSKWANIQYRKGAQDAKRGKLFTRLIREITVAARLEGGDPATSPRLRTAIDKAFAANMPKDNIERAIKRGTGDLEGVAYEEVRYEGYGPYGVAVMVDCMTDNRNRTVAEIRHVFSKWGGNLGTDGSVAYLFSKKGIISYSKESNEDAIMEVAIEGGAEDVVTNEDSSIDVFTEPEEFSTVKKALDEAGLKAEQAEITQHASTSVSLALEEARKMLDFLDALEELDDVQQVYSNADFSEEILAQLG.

The protein belongs to the TACO1 family.

It localises to the cytoplasm. This chain is Probable transcriptional regulatory protein Noc_0137, found in Nitrosococcus oceani (strain ATCC 19707 / BCRC 17464 / JCM 30415 / NCIMB 11848 / C-107).